The following is a 357-amino-acid chain: Holliday junction branch migration complex subunit RuvB (357 aa).

A compositionally biased stretch (low complexity) spans 1–15 (MAIQSDSLSSLPDSP). The tract at residues 1 to 30 (MAIQSDSLSSLPDSPRIVAPQPVSPNEESI) is disordered. Residues 13 to 195 (DSPRIVAPQP…FGIVSRLEFY (183 aa)) form a large ATPase domain (RuvB-L) region. ATP contacts are provided by residues L34, R35, G76, K79, T80, T81, 142 to 144 (EDF), R185, Y195, and R232. T80 provides a ligand contact to Mg(2+). Residues 196 to 266 (NTDELARIVT…AAGRALAMLD (71 aa)) form a small ATPAse domain (RuvB-S) region. The head domain (RuvB-H) stretch occupies residues 269 to 357 (PQGLDVMDRK…SGGTGELFSK (89 aa)). Residues R305, R324, and R329 each coordinate DNA.

Belongs to the RuvB family. In terms of assembly, homohexamer. Forms an RuvA(8)-RuvB(12)-Holliday junction (HJ) complex. HJ DNA is sandwiched between 2 RuvA tetramers; dsDNA enters through RuvA and exits via RuvB. An RuvB hexamer assembles on each DNA strand where it exits the tetramer. Each RuvB hexamer is contacted by two RuvA subunits (via domain III) on 2 adjacent RuvB subunits; this complex drives branch migration. In the full resolvosome a probable DNA-RuvA(4)-RuvB(12)-RuvC(2) complex forms which resolves the HJ.

It is found in the cytoplasm. It catalyses the reaction ATP + H2O = ADP + phosphate + H(+). Its function is as follows. The RuvA-RuvB-RuvC complex processes Holliday junction (HJ) DNA during genetic recombination and DNA repair, while the RuvA-RuvB complex plays an important role in the rescue of blocked DNA replication forks via replication fork reversal (RFR). RuvA specifically binds to HJ cruciform DNA, conferring on it an open structure. The RuvB hexamer acts as an ATP-dependent pump, pulling dsDNA into and through the RuvAB complex. RuvB forms 2 homohexamers on either side of HJ DNA bound by 1 or 2 RuvA tetramers; 4 subunits per hexamer contact DNA at a time. Coordinated motions by a converter formed by DNA-disengaged RuvB subunits stimulates ATP hydrolysis and nucleotide exchange. Immobilization of the converter enables RuvB to convert the ATP-contained energy into a lever motion, pulling 2 nucleotides of DNA out of the RuvA tetramer per ATP hydrolyzed, thus driving DNA branch migration. The RuvB motors rotate together with the DNA substrate, which together with the progressing nucleotide cycle form the mechanistic basis for DNA recombination by continuous HJ branch migration. Branch migration allows RuvC to scan DNA until it finds its consensus sequence, where it cleaves and resolves cruciform DNA. The protein is Holliday junction branch migration complex subunit RuvB of Bordetella pertussis (strain Tohama I / ATCC BAA-589 / NCTC 13251).